A 248-amino-acid chain; its full sequence is MQTCPLAFPGHVSQALGTLLFLAASLSAQNEGWDSPICTEGVVSVSWGENTVMSCNISNAFSHVNIKLRAHGQESAIFNEVAPGYFSRDGWQLQVQGGVAQLVIKGARDSHAGLYMWHLVGHQRNNRQVTLEVSGAEPQSAPDTGFWPVPAVVTAVFILLVALVMFAWYRCRCSQQRREKKFFLLEPQMKVAALRAGAQQGLSRASAELWTPDSEPTPRPLALVFKPSPLGALELLSPQPLFPYAADP.

A signal peptide spans 1-28 (MQTCPLAFPGHVSQALGTLLFLAASLSA). The Extracellular segment spans residues 29–145 (QNEGWDSPIC…AEPQSAPDTG (117 aa)). A disulfide bridge links C38 with C55. N56 carries an N-linked (GlcNAc...) asparagine glycan. A helical membrane pass occupies residues 146 to 166 (FWPVPAVVTAVFILLVALVMF). The Cytoplasmic portion of the chain corresponds to 167-248 (AWYRCRCSQQ…QPLFPYAADP (82 aa)).

The protein belongs to the SECTM family. As to quaternary structure, interacts with CD7. Detected at the highest levels in peripheral blood leukocytes and breast cancer cell lines. Found in leukocytes of the myeloid lineage, with the strongest expression observed in granulocytes and no detectable expression in lymphocytes. Expressed in thymic epithelial cells and fibroblasts.

Its subcellular location is the cell membrane. The protein localises to the secreted. Functionally, may be involved in thymocyte signaling. The protein is Secreted and transmembrane protein 1 (SECTM1) of Homo sapiens (Human).